Consider the following 1319-residue polypeptide: DNA (cytosine-5)-methyltransferase CMT2 (1319 aa).

The segment covering 1–15 (METPPPDPVSPPPPA) has biased composition (pro residues). 4 disordered regions span residues 1–34 (METPPPDPVSPPPPAADEGSPGGDDGAEDAGGFS), 142–189 (ALDS…VASS), 265–302 (SAASSMPLNQNGDSSRASKRRVADSRKSRSSEGSKLPA), and 442–468 (KSRVVSKTPQGRGRRSPQPPKTQRART). Positions 266–279 (AASSMPLNQNGDSS) are enriched in polar residues. Residues 285–296 (RVADSRKSRSSE) are compositionally biased toward basic and acidic residues. The 118-residue stretch at 602–719 (YTFCIGECAF…IDYSTFSTIE (118 aa)) folds into the BAH domain. An SAM-dependent MTase C5-type domain is found at 758–1296 (LSLLDLYCGC…YALAMAYLKK (539 aa)). The Chromo domain maps to 863–928 (FEVWKLVDIC…EGHRQRILPR (66 aa)). Cys-941 is a catalytic residue.

Its subcellular location is the nucleus. The enzyme catalyses a 2'-deoxycytidine in DNA + S-adenosyl-L-methionine = a 5-methyl-2'-deoxycytidine in DNA + S-adenosyl-L-homocysteine + H(+). Its function is as follows. Involved in CpXpG DNA methylation. The protein is DNA (cytosine-5)-methyltransferase CMT2 of Oryza sativa subsp. japonica (Rice).